Here is a 336-residue protein sequence, read N- to C-terminus: DNA-directed RNA polymerase subunit alpha (336 aa).

The tract at residues 1 to 226 (MLIAQRPTLS…ELFGLARELN (226 aa)) is alpha N-terminal domain (alpha-NTD). The tract at residues 241–336 (AALAADMALP…DDAAFSDDEL (96 aa)) is alpha C-terminal domain (alpha-CTD).

This sequence belongs to the RNA polymerase alpha chain family. As to quaternary structure, homodimer. The RNAP catalytic core consists of 2 alpha, 1 beta, 1 beta' and 1 omega subunit. When a sigma factor is associated with the core the holoenzyme is formed, which can initiate transcription.

It carries out the reaction RNA(n) + a ribonucleoside 5'-triphosphate = RNA(n+1) + diphosphate. Its function is as follows. DNA-dependent RNA polymerase catalyzes the transcription of DNA into RNA using the four ribonucleoside triphosphates as substrates. The sequence is that of DNA-directed RNA polymerase subunit alpha from Paenarthrobacter aurescens (strain TC1).